We begin with the raw amino-acid sequence, 273 residues long: Undecaprenyl-diphosphatase (273 aa).

Helical transmembrane passes span 13–35, 45–62, 82–102, 108–128, 186–206, 219–239, and 250–270; these read GLVE…VFGN, VFEI…VFEY, FVLN…LFDK, LFNP…ILWV, TEFS…YDVL, LILI…KALL, and FAYY…SGWI.

The protein belongs to the UppP family.

The protein resides in the cell inner membrane. It carries out the reaction di-trans,octa-cis-undecaprenyl diphosphate + H2O = di-trans,octa-cis-undecaprenyl phosphate + phosphate + H(+). Its function is as follows. Catalyzes the dephosphorylation of undecaprenyl diphosphate (UPP). Confers resistance to bacitracin. In Neisseria gonorrhoeae (strain ATCC 700825 / FA 1090), this protein is Undecaprenyl-diphosphatase.